The primary structure comprises 93 residues: Pyrimidine/purine nucleoside phosphorylase (93 aa).

It belongs to the nucleoside phosphorylase PpnP family.

The catalysed reaction is a purine D-ribonucleoside + phosphate = a purine nucleobase + alpha-D-ribose 1-phosphate. It carries out the reaction adenosine + phosphate = alpha-D-ribose 1-phosphate + adenine. It catalyses the reaction cytidine + phosphate = cytosine + alpha-D-ribose 1-phosphate. The enzyme catalyses guanosine + phosphate = alpha-D-ribose 1-phosphate + guanine. The catalysed reaction is inosine + phosphate = alpha-D-ribose 1-phosphate + hypoxanthine. It carries out the reaction thymidine + phosphate = 2-deoxy-alpha-D-ribose 1-phosphate + thymine. It catalyses the reaction uridine + phosphate = alpha-D-ribose 1-phosphate + uracil. The enzyme catalyses xanthosine + phosphate = alpha-D-ribose 1-phosphate + xanthine. In terms of biological role, catalyzes the phosphorolysis of diverse nucleosides, yielding D-ribose 1-phosphate and the respective free bases. Can use uridine, adenosine, guanosine, cytidine, thymidine, inosine and xanthosine as substrates. Also catalyzes the reverse reactions. The protein is Pyrimidine/purine nucleoside phosphorylase of Marinobacter nauticus (strain ATCC 700491 / DSM 11845 / VT8) (Marinobacter aquaeolei).